A 59-amino-acid chain; its full sequence is Large ribosomal subunit protein uL30 (59 aa).

This sequence belongs to the universal ribosomal protein uL30 family. In terms of assembly, part of the 50S ribosomal subunit.

The chain is Large ribosomal subunit protein uL30 from Proteus mirabilis (strain HI4320).